The chain runs to 940 residues: Isoleucine--tRNA ligase (940 aa).

A 'HIGH' region motif is present at residues 58–68 (PYANGDIHIGH). An L-isoleucyl-5'-AMP-binding site is contributed by glutamate 564. Positions 605–609 (KMSKS) match the 'KMSKS' region motif. Position 608 (lysine 608) interacts with ATP. Zn(2+) is bound by residues cysteine 903, cysteine 906, cysteine 923, and cysteine 926.

The protein belongs to the class-I aminoacyl-tRNA synthetase family. IleS type 1 subfamily. Monomer. The cofactor is Zn(2+).

The protein resides in the cytoplasm. It catalyses the reaction tRNA(Ile) + L-isoleucine + ATP = L-isoleucyl-tRNA(Ile) + AMP + diphosphate. Catalyzes the attachment of isoleucine to tRNA(Ile). As IleRS can inadvertently accommodate and process structurally similar amino acids such as valine, to avoid such errors it has two additional distinct tRNA(Ile)-dependent editing activities. One activity is designated as 'pretransfer' editing and involves the hydrolysis of activated Val-AMP. The other activity is designated 'posttransfer' editing and involves deacylation of mischarged Val-tRNA(Ile). The protein is Isoleucine--tRNA ligase of Shewanella piezotolerans (strain WP3 / JCM 13877).